The primary structure comprises 869 residues: MSSCKTTLSEMVGSVTKDRGTINVKARTRSSNVTFKPPVTHDMVRSLFDPTLKKSLLEKCIALAIISNFFICYWVFQRFGLQFTKYFFLVQYLFWRIAYNLGIGLVLHYQSHYETLTNCAKTHAIFSKIPHNKDANSNFSTNSNSFSEKFWNFIRKFCQYEIRSKMPKEYDLFAYPEEINVWLIFRQFVDLILMQDFVTYIIYVYLSIPYSWVQIFNWRSLLGVILILFNIWVKLDAHRVVKDYAWYWGDFFFLEESELIFDGVFNISPHPMYSIGYLGYYGLSLICNDYKVLLVSVFGHYSQFLFLKYVENPHIERTYGDGTDSDSQMNSRIDDLISKENYDYSRPLINMGLSFNNFNKLRFTDYFTIGTVAALMLGTIMNARFINLNYLFITVFVTKLVSWLFISTILYKQSQSKWFTRLFLENGYTQVYSYEQWQFIYNYYLVLTYTLMIIYTGLQIWSNFSNINNSQLIFGLILVALQTWCDKETRLAISDFGWFYGDFFLSNYISTRKLTSQGIYRYLNHPEAVLGVVGVWGTVLMTNFAVTNIILAVLWTLTNFILVKFIETPHVNKIYGKTKRVSGVGKTLLGLKPLRQVSDIVNRIENIIIKSLVDESKNSNGGAELLPKNYQDNKEWNILIQEAMDSVATRLSPYCELKIENEQIETNFVLPTPVTLNWKMPIELYNGDDWIGLYKVIDTRADREKTRVGSGGHWSATSKDSYMNHGLRHKESVTEIKATEKYVQGKVTFDTSLLYFENGIYEFRYHSGNSHKVLLISTPFEISLPVLNTTTPELFEKDLTEFLTKVNVLKDGKFRPLGNKFFGMDSLKQLIKNSIGVELSSEYMRRVNGDAHVISHRAWDIKQTLDSLA.

Ser2 carries the post-translational modification N-acetylserine. Topologically, residues 2 to 55 are lumenal; that stretch reads SSCKTTLSEMVGSVTKDRGTINVKARTRSSNVTFKPPVTHDMVRSLFDPTLKKS. A helical membrane pass occupies residues 56 to 76; sequence LLEKCIALAIISNFFICYWVF. Residues 77 to 86 are Cytoplasmic-facing; it reads QRFGLQFTKY. A helical membrane pass occupies residues 87 to 107; that stretch reads FFLVQYLFWRIAYNLGIGLVL. Residues 108 to 187 lie on the Lumenal side of the membrane; the sequence is HYQSHYETLT…EINVWLIFRQ (80 aa). A helical membrane pass occupies residues 188–208; it reads FVDLILMQDFVTYIIYVYLSI. Residues 209–212 are Cytoplasmic-facing; it reads PYSW. A helical membrane pass occupies residues 213–233; that stretch reads VQIFNWRSLLGVILILFNIWV. The Lumenal portion of the chain corresponds to 234–258; it reads KLDAHRVVKDYAWYWGDFFFLEESE. The chain crosses the membrane as a helical span at residues 259–279; sequence LIFDGVFNISPHPMYSIGYLG. Topologically, residues 280 to 291 are cytoplasmic; it reads YYGLSLICNDYK. A helical transmembrane segment spans residues 292 to 310; it reads VLLVSVFGHYSQFLFLKYV. At 311–362 the chain is on the lumenal side; it reads ENPHIERTYGDGTDSDSQMNSRIDDLISKENYDYSRPLINMGLSFNNFNKLR. A helical membrane pass occupies residues 363 to 383; it reads FTDYFTIGTVAALMLGTIMNA. Residues 384–389 lie on the Cytoplasmic side of the membrane; it reads RFINLN. The helical transmembrane segment at 390–410 threads the bilayer; the sequence is YLFITVFVTKLVSWLFISTIL. Residues 411 to 439 are Lumenal-facing; sequence YKQSQSKWFTRLFLENGYTQVYSYEQWQF. Residues 440–460 form a helical membrane-spanning segment; sequence IYNYYLVLTYTLMIIYTGLQI. Topologically, residues 461–463 are cytoplasmic; that stretch reads WSN. Residues 464-484 form a helical membrane-spanning segment; that stretch reads FSNINNSQLIFGLILVALQTW. The Lumenal portion of the chain corresponds to 485-534; the sequence is CDKETRLAISDFGWFYGDFFLSNYISTRKLTSQGIYRYLNHPEAVLGVVG. A helical transmembrane segment spans residues 535–555; that stretch reads VWGTVLMTNFAVTNIILAVLW. At 556–869 the chain is on the cytoplasmic side; that stretch reads TLTNFILVKF…DIKQTLDSLA (314 aa).

It belongs to the class VI-like SAM-binding methyltransferase superfamily. CHO2 family.

The protein localises to the endoplasmic reticulum membrane. The enzyme catalyses a 1,2-diacyl-sn-glycero-3-phosphoethanolamine + S-adenosyl-L-methionine = a 1,2-diacyl-sn-glycero-3-phospho-N-methylethanolamine + S-adenosyl-L-homocysteine + H(+). It functions in the pathway phospholipid metabolism; phosphatidylcholine biosynthesis. Its function is as follows. Catalyzes the first step of the methylation pathway of phosphatidylcholine biosynthesis, the SAM-dependent methylation of phosphatidylethanolamine (PE) to phosphatidylmonomethylethanolamine (PMME). The chain is Phosphatidylethanolamine N-methyltransferase (CHO2) from Saccharomyces cerevisiae (strain AWRI1631) (Baker's yeast).